The primary structure comprises 317 residues: Acetyl-coenzyme A carboxylase carboxyl transferase subunit alpha (317 aa).

The 254-residue stretch at 40–293 folds into the CoA carboxyltransferase C-terminal domain; sequence LEVRVREAIV…GDVIASALAE (254 aa).

Belongs to the AccA family. As to quaternary structure, acetyl-CoA carboxylase is a heterohexamer composed of biotin carboxyl carrier protein (AccB), biotin carboxylase (AccC) and two subunits each of ACCase subunit alpha (AccA) and ACCase subunit beta (AccD).

It is found in the cytoplasm. The catalysed reaction is N(6)-carboxybiotinyl-L-lysyl-[protein] + acetyl-CoA = N(6)-biotinyl-L-lysyl-[protein] + malonyl-CoA. Its pathway is lipid metabolism; malonyl-CoA biosynthesis; malonyl-CoA from acetyl-CoA: step 1/1. In terms of biological role, component of the acetyl coenzyme A carboxylase (ACC) complex. First, biotin carboxylase catalyzes the carboxylation of biotin on its carrier protein (BCCP) and then the CO(2) group is transferred by the carboxyltransferase to acetyl-CoA to form malonyl-CoA. This Rhizobium johnstonii (strain DSM 114642 / LMG 32736 / 3841) (Rhizobium leguminosarum bv. viciae) protein is Acetyl-coenzyme A carboxylase carboxyl transferase subunit alpha.